We begin with the raw amino-acid sequence, 285 residues long: Shikimate dehydrogenase (NADP(+)) (285 aa).

Residues 19 to 21 (SLS) and T66 contribute to the shikimate site. K70 acts as the Proton acceptor in catalysis. Shikimate-binding residues include N91 and D107. NADP(+) is bound by residues 129–133 (GSGGA) and L228. Y230 contacts shikimate. Residue G251 coordinates NADP(+).

This sequence belongs to the shikimate dehydrogenase family. Homodimer.

It catalyses the reaction shikimate + NADP(+) = 3-dehydroshikimate + NADPH + H(+). Its pathway is metabolic intermediate biosynthesis; chorismate biosynthesis; chorismate from D-erythrose 4-phosphate and phosphoenolpyruvate: step 4/7. Functionally, involved in the biosynthesis of the chorismate, which leads to the biosynthesis of aromatic amino acids. Catalyzes the reversible NADPH linked reduction of 3-dehydroshikimate (DHSA) to yield shikimate (SA). The polypeptide is Shikimate dehydrogenase (NADP(+)) (Prochlorococcus marinus subsp. pastoris (strain CCMP1986 / NIES-2087 / MED4)).